Here is a 156-residue protein sequence, read N- to C-terminus: 6,7-dimethyl-8-ribityllumazine synthase (156 aa).

5-amino-6-(D-ribitylamino)uracil-binding positions include Phe-23, 57 to 59 (SFE), and 81 to 83 (AVI). 86-87 (GT) lines the (2S)-2-hydroxy-3-oxobutyl phosphate pocket. His-89 functions as the Proton donor in the catalytic mechanism. Residue Phe-114 coordinates 5-amino-6-(D-ribitylamino)uracil. Residue Arg-128 participates in (2S)-2-hydroxy-3-oxobutyl phosphate binding.

It belongs to the DMRL synthase family. As to quaternary structure, forms an icosahedral capsid composed of 60 subunits, arranged as a dodecamer of pentamers.

It carries out the reaction (2S)-2-hydroxy-3-oxobutyl phosphate + 5-amino-6-(D-ribitylamino)uracil = 6,7-dimethyl-8-(1-D-ribityl)lumazine + phosphate + 2 H2O + H(+). It functions in the pathway cofactor biosynthesis; riboflavin biosynthesis; riboflavin from 2-hydroxy-3-oxobutyl phosphate and 5-amino-6-(D-ribitylamino)uracil: step 1/2. Functionally, catalyzes the formation of 6,7-dimethyl-8-ribityllumazine by condensation of 5-amino-6-(D-ribitylamino)uracil with 3,4-dihydroxy-2-butanone 4-phosphate. This is the penultimate step in the biosynthesis of riboflavin. The sequence is that of 6,7-dimethyl-8-ribityllumazine synthase from Alkalilimnicola ehrlichii (strain ATCC BAA-1101 / DSM 17681 / MLHE-1).